Reading from the N-terminus, the 199-residue chain is Transcriptional regulatory protein EntR (199 aa).

The region spanning 3-124 (KILVIDRCHF…TLSHTIQEAL (122 aa)) is the Response regulatory domain. Asp-8 is subject to 4-aspartylphosphate. Positions 133–198 (PKNATPLLTP…SPFLSLPGKG (66 aa)) constitute an HTH luxR-type domain. The segment at residues 157 to 176 (NNAIAAALSIHGKTVYTYKR) is a DNA-binding region (H-T-H motif).

In terms of biological role, may serve to repress the entericidin locus in C.freundii. This Citrobacter freundii protein is Transcriptional regulatory protein EntR (ecnR).